The sequence spans 444 residues: Tubulin beta chain (444 aa).

Residues Gln11, Glu69, Ser138, Gly142, Thr143, Gly144, Asn204, and Asn226 each coordinate GTP. A Mg(2+)-binding site is contributed by Glu69.

It belongs to the tubulin family. Dimer of alpha and beta chains. A typical microtubule is a hollow water-filled tube with an outer diameter of 25 nm and an inner diameter of 15 nM. Alpha-beta heterodimers associate head-to-tail to form protofilaments running lengthwise along the microtubule wall with the beta-tubulin subunit facing the microtubule plus end conferring a structural polarity. Microtubules usually have 13 protofilaments but different protofilament numbers can be found in some organisms and specialized cells. It depends on Mg(2+) as a cofactor.

It localises to the cytoplasm. Its subcellular location is the cytoskeleton. Functionally, tubulin is the major constituent of microtubules, a cylinder consisting of laterally associated linear protofilaments composed of alpha- and beta-tubulin heterodimers. Microtubules grow by the addition of GTP-tubulin dimers to the microtubule end, where a stabilizing cap forms. Below the cap, tubulin dimers are in GDP-bound state, owing to GTPase activity of alpha-tubulin. The protein is Tubulin beta chain of Phytophthora cinnamomi (Cinnamon fungus).